The sequence spans 198 residues: Synaptobrevin homolog YKT6-A (198 aa).

The region spanning 8-127 is the Longin domain; that stretch reads VLYKGENKVH…IQYNALDSYL (120 aa). In terms of domain architecture, v-SNARE coiled-coil homology spans 138–198; the sequence is PMSKVQAELD…RKQNSCCDIM (61 aa). Cysteine 194 is lipidated: S-palmitoyl cysteine. At cysteine 195 the chain carries Cysteine methyl ester. Cysteine 195 is lipidated: S-farnesyl cysteine. A propeptide spans 196–198 (removed in mature form); the sequence is DIM.

The protein belongs to the synaptobrevin family. In terms of processing, palmitoylated; catalyzes its own palmitoylation. Palmitoylation is required for Golgi targeting. Post-translationally, farnesylation is required for Golgi targeting.

Its subcellular location is the cytoplasm. It localises to the cytosol. It is found in the cytoplasmic vesicle membrane. The protein resides in the golgi apparatus membrane. Vesicular soluble NSF attachment protein receptor (v-SNARE) mediating vesicle docking and fusion to a specific acceptor cellular compartment. Functions in endoplasmic reticulum to Golgi transport; as part of a SNARE complex composed of GOSR1, GOSR2 and STX5. Functions in early/recycling endosome to TGN transport; as part of a SNARE complex composed of BET1L, GOSR1 and STX5. Has a S-palmitoyl transferase activity. The polypeptide is Synaptobrevin homolog YKT6-A (ykt6-a) (Xenopus laevis (African clawed frog)).